A 128-amino-acid chain; its full sequence is Large ribosomal subunit protein eL22 (128 aa).

The protein belongs to the eukaryotic ribosomal protein eL22 family. As to quaternary structure, component of the large ribosomal subunit.

The protein localises to the cytoplasm. Component of the large ribosomal subunit. The ribosome is a large ribonucleoprotein complex responsible for the synthesis of proteins in the cell. This chain is Large ribosomal subunit protein eL22 (rpl22), found in Ictalurus punctatus (Channel catfish).